Reading from the N-terminus, the 219-residue chain is Oligoribonuclease (219 aa).

The Exonuclease domain occupies 30-193; it reads LVWLDMEMTG…ADIVESIEEL (164 aa). Tyrosine 151 is an active-site residue.

This sequence belongs to the oligoribonuclease family.

Its subcellular location is the cytoplasm. 3'-to-5' exoribonuclease specific for small oligoribonucleotides. This chain is Oligoribonuclease, found in Ralstonia nicotianae (strain ATCC BAA-1114 / GMI1000) (Ralstonia solanacearum).